The sequence spans 31 residues: Cyclotide vico-A (31 aa).

Residues 1-31 constitute a cross-link (cyclopeptide (Gly-Asn)); sequence GSIPCAESCVYIPCFTGIAGCSCKNKVCYYN. 3 disulfide bridges follow: C5-C21, C9-C23, and C14-C28.

Belongs to the cyclotide family. Bracelet subfamily. In terms of processing, this is a cyclic peptide.

Probably participates in a plant defense mechanism. The protein is Cyclotide vico-A of Viola cotyledon (Violeta).